We begin with the raw amino-acid sequence, 324 residues long: Concanavalin B (324 aa).

The N-terminal stretch at 1 to 25 is a signal peptide; it reads MGCERKALILMVVIWIMSFWTLSLA. The GH18 domain maps to 30–311; that stretch reads TEIAVYWGQR…TNIIRYLNAT (282 aa). N-linked (GlcNAc...) asparagine glycosylation occurs at asparagine 309.

This sequence belongs to the glycosyl hydrolase 18 family.

Functionally, may act as a carbohydrate-binding protein. The chain is Concanavalin B from Canavalia ensiformis (Jack bean).